The chain runs to 537 residues: Apoptosis inhibitor 5-like protein API5 (537 aa).

The ARM-like and Heat-like helical repeats stretch occupies residues 9–363 (AEVERLYELG…TTNSLCGYKI (355 aa)). The tract at residues 465 to 537 (WMEQPKKPAP…GGRGRGWGYR (73 aa)) is disordered. The span at 474 to 492 (PTTTGGKRSQPATNGNTPA) shows a compositional bias: polar residues.

This sequence belongs to the API5 family. In terms of assembly, interacts with AIP1 and AIP2.

It localises to the nucleus. Its function is as follows. Putative anti-apoptotic factor involved in the regulation of tapetal programmed cell death (PCD) and degeneration during anther development. Interacts directly with the DEAD-box ATP-dependent RNA helicases AIP1 and AIP2 that form dimers and bind the promoter region of the cysteine protease CP1 involved in tapetum PCD. This chain is Apoptosis inhibitor 5-like protein API5, found in Oryza sativa subsp. japonica (Rice).